The sequence spans 349 residues: Thioredoxin-related transmembrane protein 4 (349 aa).

The N-terminal stretch at 1–23 is a signal peptide; that stretch reads MAGGRCGPQLTALLAAWIAAVAA. Residues 30 to 137 form the Thioredoxin domain; it reads AALPPEQSRV…FEDLQNYILE (108 aa). Catalysis depends on nucleophile residues Cys-64 and Cys-67. A disulfide bond links Cys-64 and Cys-67. Residues 190 to 210 traverse the membrane as a helical segment; it reads VFFVIATLVFGLFMGLVLVVI. Positions 225-240 are enriched in basic and acidic residues; sequence RSEQNRRSEEAHRAEQ. Positions 225–349 are disordered; it reads RSEQNRRSEE…RKSQHADKGL (125 aa). Acidic residues-rich tracts occupy residues 242-284 and 312-321; these read QDAE…EEDN and VEPEEAEEGI. Residues Ser-251 and Ser-259 each carry the phosphoserine modification. A compositionally biased stretch (basic and acidic residues) spans 335 to 349; sequence DSLRQRKSQHADKGL.

Its subcellular location is the nucleus inner membrane. The protein localises to the endoplasmic reticulum membrane. The polypeptide is Thioredoxin-related transmembrane protein 4 (TMX4) (Homo sapiens (Human)).